A 263-amino-acid polypeptide reads, in one-letter code: Apolipoprotein A-I (263 aa).

The N-terminal stretch at 1 to 18 (MKAVVLAVAVLFLTGSQA) is a signal peptide. Tandem repeats lie at residues 66 to 87 (LKLL…SELG) and 88 to 109 (PVTQ…QEMN). Residues 66–263 (LKLLDNWDTL…DEVSKKLSAQ (198 aa)) form a 10 X approximate tandem repeats region. Position 108 is a methionine sulfoxide (methionine 108). Residues 110-120 (KDLVEVKEKVQ) form a 3; half-length repeat. Repeat copies occupy residues 121 to 142 (PYLK…KKVE), 143 to 164 (PLGT…EKLT), 165 to 186 (PLGE…AQLG), 187 to 206 (PYSD…LKDS), and 207 to 228 (ASLA…EKAK). Residues 229–239 (PALEDLRLGLL) form a 9; half-length repeat. Repeat 10 spans residues 240-263 (PVLESLKASFLSSIDEVSKKLSAQ).

It belongs to the apolipoprotein A1/A4/E family. In terms of assembly, homodimer. Interacts with APOA1BP and CLU. Component of a sperm activating protein complex (SPAP), consisting of APOA1, an immunoglobulin heavy chain, an immunoglobulin light chain and albumin. Interacts with NDRG1. Interacts with SCGB3A2. Interacts with NAXE and YJEFN3. Glycosylated. In terms of processing, palmitoylated. Post-translationally, phosphorylation sites are present in the extracellular medium.

It is found in the secreted. Its function is as follows. Participates in the reverse transport of cholesterol from tissues to the liver for excretion by promoting cholesterol efflux from tissues and by acting as a cofactor for the lecithin cholesterol acyltransferase (LCAT). As part of the SPAP complex, activates spermatozoa motility. The protein is Apolipoprotein A-I (APOA1) of Octodon degus (Degu).